The sequence spans 547 residues: Hydroxylamine reductase (547 aa).

[4Fe-4S] cluster is bound by residues cysteine 5, cysteine 8, cysteine 17, and cysteine 23. Positions 242, 266, 310, 401, 429, 454, 489, and 491 each coordinate hybrid [4Fe-2O-2S] cluster. Cysteine 401 carries the cysteine persulfide modification.

It belongs to the HCP family. The cofactor is [4Fe-4S] cluster. Hybrid [4Fe-2O-2S] cluster is required as a cofactor.

The protein localises to the cytoplasm. The enzyme catalyses A + NH4(+) + H2O = hydroxylamine + AH2 + H(+). In terms of biological role, catalyzes the reduction of hydroxylamine to form NH(3) and H(2)O. This chain is Hydroxylamine reductase, found in Thermoanaerobacter pseudethanolicus (strain ATCC 33223 / 39E) (Clostridium thermohydrosulfuricum).